A 309-amino-acid polypeptide reads, in one-letter code: Probable 2,4-dienoyl-CoA reductase decr-1.2 [(3E)-enoyl-CoA-producing] (309 aa).

NADP(+)-binding positions include 28–60 (VLVTGGGTGIGKAIATTFAHLRATVVIAARRME), 32–37 (GGGTGI), arginine 57, and aspartate 83. Arginine 57 serves as a coordination point for substrate. Residues phenylalanine 116 and serine 124 each coordinate substrate. Tyrosine 166 (proton acceptor) is an active-site residue. Residues lysine 181 and 207–210 (PGPI) contribute to the NADP(+) site. Arginine 218 serves as a coordination point for substrate.

It belongs to the short-chain dehydrogenases/reductases (SDR) family. 2,4-dienoyl-CoA reductase subfamily.

The catalysed reaction is a (2E,4E)-dienoyl-CoA + NADPH + H(+) = a 4,5-saturated-(3E)-enoyl-CoA + NADP(+). The enzyme catalyses a (2E,4Z)-dienoyl-CoA + NADPH + H(+) = a 4,5-saturated-(3E)-enoyl-CoA + NADP(+). Functionally, auxiliary enzyme of beta-oxidation. It participates in the metabolism of unsaturated fatty enoyl-CoA esters having double bonds in both even- and odd-numbered positions. Catalyzes the NADP-dependent reduction of 2,4-dienoyl-CoA to yield trans-3-enoyl-CoA. The polypeptide is Probable 2,4-dienoyl-CoA reductase decr-1.2 [(3E)-enoyl-CoA-producing] (Caenorhabditis elegans).